Reading from the N-terminus, the 450-residue chain is Magnesium transporter MgtE (450 aa).

Residues 1 to 283 (MEEKLAVSLQ…SEAGPVALWL (283 aa)) lie on the Cytoplasmic side of the membrane. Mg(2+)-binding residues include glutamate 59, aspartate 91, aspartate 95, and glycine 136. CBS domains are found at residues 138–200 (MTPE…RVAE) and 202–258 (MNPK…EATE). ATP contacts are provided by tyrosine 170, serine 185, arginine 187, aspartate 188, and valine 207. Positions 216, 223, 226, 247, 250, 255, 258, and 259 each coordinate Mg(2+). Glutamate 275 serves as a coordination point for Ca(2+). Residues glutamate 275, glutamine 304, glutamate 307, and glutamate 311 each contribute to the Mn(2+) site. The helical transmembrane segment at 284-306 (ARVRWLVILILTGMVTSSILQGF) threads the bilayer. Residues 307-315 (ESVLEAVTA) lie on the Periplasmic side of the membrane. Residue glutamate 311 coordinates Ca(2+). A helical membrane pass occupies residues 316-337 (LAFYVPVLLGTGGNTGNQSATL). Topologically, residues 338–351 (IIRALATRDLDLRD) are cytoplasmic. The chain crosses the membrane as a helical span at residues 352–381 (WRRVFLKEMGVGLLLGLTLSFLLVGKVYWD). The Periplasmic segment spans residues 382–385 (GHPL). Histidine 383 is a Mn(2+) binding site. A helical membrane pass occupies residues 386–409 (LLPVVGVSLVLIVFFANLVGAMLP). Over 410-420 (FLLRRLGVDPA) the chain is Cytoplasmic. Mg(2+) is bound by residues aspartate 418, alanine 428, and aspartate 432. Residues 421 to 443 (LVSNPLVATLSDVTGLLIYLSVA) form a helical membrane-spanning segment. Over 444 to 450 (RLLLEAV) the chain is Periplasmic.

It belongs to the SLC41A transporter family. In terms of assembly, homodimer.

The protein resides in the cell inner membrane. The enzyme catalyses Mg(2+)(in) = Mg(2+)(out). Its activity is regulated as follows. The channel activity is regulated via the N-terminal cytoplasmic region, which acts as a Mg(2+) sensor to regulate the gating of the ion-conducting pore in response to the intracellular magnesium concentration. Under high-intracellular magnesium conditions, binding of magnesium to the N-terminal cytoplasmic domain stabilizes the closed conformation of the channel. Under low-intracellular magnesium conditions, the channel is in equilibrium between the open and closed states. A cation-binding site within the membrane (M1) strictly recognizes the size and geometry of the Mg(2+) hydration shells, which may be important for the selective transport of Mg(2+) over other cations. Cation-binding sites on the periplasmic side (M2 and M3) regulate channel opening and prevent conduction of near-cognate cations. Binding of Mn(2+) to the periplasmic sites strongly inhibits the Mg(2+) transport activity. In addition, activity is regulated by ATP, which binds to MgtE and modulates its Mg(2+)-dependent channel gating. ATP binding enhances the intracellular domain affinity for Mg(2+) within physiological concentrations of this divalent cation, enabling MgtE to function as an in vivo Mg(2+) sensor. ATP dissociation from MgtE upregulates Mg(2+) influx at both high and low intracellular Mg(2+) concentrations. Functionally, highly selective magnesium channel that plays an important role in Mg(2+) homeostasis. Functions as a Mg(2+)-dependent gating channel. Exhibits low activity with cobalt, suggesting that it might also be involved in the uptake of Co(2+) as a micronutrient. Also exhibits low activity with Ca(2+), but it shows almost no activity with Mn(2+). The sequence is that of Magnesium transporter MgtE from Thermus thermophilus (strain ATCC 27634 / DSM 579 / HB8).